Here is a 377-residue protein sequence, read N- to C-terminus: 1,3,6,8-tetrahydroxynaphthalene synthase (377 aa).

Residue Cys164 is part of the active site.

This sequence belongs to the thiolase-like superfamily. Chalcone/stilbene synthases family. In terms of assembly, homodimer.

The enzyme catalyses 5 malonyl-CoA + 5 H(+) = naphthalene-1,3,6,8-tetrol + 5 CO2 + 5 CoA + H2O. The protein operates within pigment biosynthesis; melanin biosynthesis. Its function is as follows. Involved in the biosynthesis of melanin but also various secondary metabolites containing a naphthoquinone ring. Catalyzes the iterative condensation of five CoA-linked malonyl units to form a pentaketide intermediate. THNS subsequently catalyzes the dual intramolecular Claisen and aldol condensations of this linear intermediate to produce the fused ring of 1,3,6,8-tetrahydroxynaphthalene (THN). This is 1,3,6,8-tetrahydroxynaphthalene synthase from Streptomyces peucetius subsp. caesius.